A 99-amino-acid chain; its full sequence is Duplicate procyclin (99 aa).

The polypeptide is Duplicate procyclin (Trypanosoma brucei brucei).